Reading from the N-terminus, the 188-residue chain is Phosphoheptose isomerase (188 aa).

The 156-residue stretch at 33–188 (VTASLRAGGK…CGLVEDALCS (156 aa)) folds into the SIS domain. Position 48-50 (48-50 (NGG)) interacts with substrate. Zn(2+) is bound by residues H57 and E61. Substrate is bound by residues E61, 90–91 (ND), 116–118 (STS), S121, and Q168. Residues Q168 and H176 each coordinate Zn(2+).

The protein belongs to the SIS family. GmhA subfamily. Homotetramer. The cofactor is Zn(2+).

It is found in the cytoplasm. It carries out the reaction 2 D-sedoheptulose 7-phosphate = D-glycero-alpha-D-manno-heptose 7-phosphate + D-glycero-beta-D-manno-heptose 7-phosphate. Its pathway is carbohydrate biosynthesis; D-glycero-D-manno-heptose 7-phosphate biosynthesis; D-glycero-alpha-D-manno-heptose 7-phosphate and D-glycero-beta-D-manno-heptose 7-phosphate from sedoheptulose 7-phosphate: step 1/1. Catalyzes the isomerization of sedoheptulose 7-phosphate in D-glycero-D-manno-heptose 7-phosphate. The sequence is that of Phosphoheptose isomerase from Rhodospirillum rubrum (strain ATCC 11170 / ATH 1.1.1 / DSM 467 / LMG 4362 / NCIMB 8255 / S1).